Here is an 808-residue protein sequence, read N- to C-terminus: MSSTQAPVEPPKRRRIGVLTSGGDAPGMNGAVRAVVRMAIYSDCEAYAVFEGYEGLVHGGHMIRQLHWEDVRGWLSKGGTLIGSARSMAFRERAGRLKAAKNMVLRGIDALVVCGGDGSLTGADVFRSEWPGLLEELVKNGELTEEQIEPYKVLNIVGLVGSIDNDMSGTDATIGCYSSLTRICDAVDDVFDTAFSHQRGFVIEVMGRHCGWLALMSAISTGADWLFIPEMPPRDGWEDDMCSIITKNRKERGKRRTIVIVAEGAQDRSLNKISSSTVKDILTQRLGLDTRVTVLGHTQRGGPACAYDRWLSTLQGVEAVRAVLDMKPDSPSPVITIRENKIMRTPLVDAVQETKHVAKLIHDKDFEAAMRLRDAEFKEYHFAYRNTATPDHPKMILPQDKRMRIAIIHVGAPAGGMNQATRAAVGYCLTRGHTPLAIHNGFPGLCRHHDDQPVGSVREVKWLESDAWVNEGGSDIGTNRSLPSEDFETTAMCFEKYKFDALFVVGGFEAFTAVSQLRQARDKYPAFKIPMVVLPATISNNVPGTEYSLGSDTCLNTLIDFCDAIRQSASSSRRRVFVIETQGGKSGYIATTAGLAVGATAVYIPEEGIDIKMLSNDIDFLRENFARDKGANRAGKLILRNECASSTYTTQVIADIFKEEAKGRFESRSAVPGHFQQGGKPSPMDRIRALRMAVKCMLHLENYAGKSRDEIAADPMSAAVIGIKGSQVLFSAMGGEDGLEATETDWARRRPKTEFWLELQNYVNVLSGRASAGKPLWSCYESKHFPSCCRLYNTDLSIDIDPSALTSS.

The disordered stretch occupies residues 1 to 21 (MSSTQAPVEPPKRRRIGVLTS). The interval 1 to 389 (MSSTQAPVEP…YHFAYRNTAT (389 aa)) is N-terminal catalytic PFK domain 1. ATP is bound by residues Gly23, 86–87 (RS), and 116–119 (GDGS). Mg(2+) is bound at residue Asp117. Substrate is bound by residues 162-164 (SID), Arg199, 206-208 (MGR), Glu263, Arg291, and 297-300 (HTQR). Asp164 functions as the Proton acceptor in the catalytic mechanism. The segment at 390-403 (PDHPKMILPQDKRM) is interdomain linker. Positions 404–808 (RIAIIHVGAP…DIDPSALTSS (405 aa)) are C-terminal regulatory PFK domain 2. Beta-D-fructose 2,6-bisphosphate contacts are provided by residues Arg480, 537–541 (TISNN), Arg575, 582–584 (QGG), Glu642, Arg668, 674–677 (HFQQ), and Arg749.

The protein belongs to the phosphofructokinase type A (PFKA) family. ATP-dependent PFK group I subfamily. Eukaryotic two domain clade 'E' sub-subfamily. As to quaternary structure, homotetramer. It depends on Mg(2+) as a cofactor.

It is found in the cytoplasm. It catalyses the reaction beta-D-fructose 6-phosphate + ATP = beta-D-fructose 1,6-bisphosphate + ADP + H(+). The protein operates within carbohydrate degradation; glycolysis; D-glyceraldehyde 3-phosphate and glycerone phosphate from D-glucose: step 3/4. Its activity is regulated as follows. Allosterically activated by ADP, AMP, or fructose 2,6-bisphosphate, and allosterically inhibited by ATP or citrate. Functionally, catalyzes the phosphorylation of D-fructose 6-phosphate to fructose 1,6-bisphosphate by ATP, the first committing step of glycolysis. This chain is ATP-dependent 6-phosphofructokinase (pfkA), found in Aspergillus fumigatus (strain ATCC MYA-4609 / CBS 101355 / FGSC A1100 / Af293) (Neosartorya fumigata).